Here is a 977-residue protein sequence, read N- to C-terminus: Glutamate receptor 2 (977 aa).

A signal peptide spans 1 to 19; it reads MNKNLLVFGFLIFVKIGET. At 20-621 the chain is on the extracellular side; the sequence is SKKFPLRAFV…FSFMEPLGMT (602 aa). Residues Asn36, Asn227, Asn291, Asn427, Asn532, and Asn566 are each glycosylated (N-linked (GlcNAc...) asparagine). A helical membrane pass occupies residues 622–642; it reads IWIFTLSSYFGVSLTIFLVSW. At 643 to 695 the chain is on the cytoplasmic side; sequence FSPYEKRIEFKRGEFTVTNEFTLYNSLWFTLAAFMQQGTDILPRAVSGRIASS. A helical transmembrane segment spans residues 696-716; that stretch reads CWWFFTLIIVSSYTANLAAFL. Topologically, residues 717–898 are extracellular; sequence TLERMTPPIE…GTSSSLNLSK (182 aa). Residues Asn783 and Asn895 are each glycosylated (N-linked (GlcNAc...) asparagine). Residues 899–919 traverse the membrane as a helical segment; the sequence is VAGIFYILLAGMVLSMCTALV. Over 920 to 977 the chain is Cytoplasmic; it reads EFLFRKNKENREKERNRMRSSRPLKPGILASCERAKQKQLQNRRTKSEEVSTPRSTLF. The interval 954–977 is disordered; sequence AKQKQLQNRRTKSEEVSTPRSTLF.

This sequence belongs to the glutamate-gated ion channel (TC 1.A.10.1) family. Command interneurons of the locomotory control circuit (AIA, AIB, AVA, AVD, AVE, PVC, RIA, RIG and RIR) and motor neurons (AVG, M1, RMDD and RMDV).

It is found in the membrane. It localises to the postsynaptic cell membrane. Functionally, L-glutamate acts as an excitatory neurotransmitter at many synapses in the central nervous system. The postsynaptic actions of glutamate are mediated by a variety of receptors that are named according to their selective agonists. Required for response to mechanical and osmotic stimuli. The polypeptide is Glutamate receptor 2 (glr-2) (Caenorhabditis elegans).